The chain runs to 612 residues: UvrABC system protein C (612 aa).

Residues 13 to 92 (AKPGVYIMHD…IKEHRPKYNT (80 aa)) form the GIY-YIG domain. Residues 204–239 (KKIMDRLTTQMQEASEKMEYEEAARYRDLLMSVKQV) enclose the UVR domain.

This sequence belongs to the UvrC family. Interacts with UvrB in an incision complex.

It localises to the cytoplasm. The UvrABC repair system catalyzes the recognition and processing of DNA lesions. UvrC both incises the 5' and 3' sides of the lesion. The N-terminal half is responsible for the 3' incision and the C-terminal half is responsible for the 5' incision. The protein is UvrABC system protein C of Lachnospira eligens (strain ATCC 27750 / DSM 3376 / VPI C15-48 / C15-B4) (Eubacterium eligens).